The chain runs to 347 residues: MNPMIFIILLTTIMLGTFIVTTSSHWFMTWLGFEMNMMAIVPVLMKKYSPRSMEAATKYFLTQATASMILMLAIIINLMYSGQWTITNMENYTASMLITIALTMKLGLAPFHFWVPEVTQGVSLPSGLILLTWQKIAPLSLLYQTYSSVNMNILLLMSLLSIMIGGWGGLNQTQLRKIMAYSSIAHMGWMMAIMVYNPNLSLLNLLIYIFMTSSMFMLLIFSSSVSTLSLSLTWNKAPIITIMSLTTLLSLGGLPPLTGFLPKWMIIQELTKNNSVILPTLMAILALLNLFFYMRLTYSTALTMFPTMNNTKFMWQFQNTNILSMMLPLITISTLALPLTPMLILLN.

Helical transmembrane passes span 1–21 (MNPM…FIVT), 25–45 (HWFM…PVLM), 59–79 (YFLT…INLM), 96–116 (MLIT…FWVP), 122–142 (VSLP…LSLL), 149–169 (VNMN…GWGG), 178–198 (IMAY…VYNP), 201–221 (SLLN…LLIF), 237–257 (APII…LPPL), 274–294 (NSVI…FFYM), and 326–346 (MLPL…LILL).

It belongs to the complex I subunit 2 family. Core subunit of respiratory chain NADH dehydrogenase (Complex I) which is composed of 45 different subunits. Interacts with TMEM242.

The protein resides in the mitochondrion inner membrane. It carries out the reaction a ubiquinone + NADH + 5 H(+)(in) = a ubiquinol + NAD(+) + 4 H(+)(out). Core subunit of the mitochondrial membrane respiratory chain NADH dehydrogenase (Complex I) that is believed to belong to the minimal assembly required for catalysis. Complex I functions in the transfer of electrons from NADH to the respiratory chain. The immediate electron acceptor for the enzyme is believed to be ubiquinone. The sequence is that of NADH-ubiquinone oxidoreductase chain 2 from Crocidura suaveolens gueldenstaedtii (Gueldenstaedt's shrew).